We begin with the raw amino-acid sequence, 180 residues long: ATP-dependent protease subunit HslV (180 aa).

T6 is an active-site residue. 3 residues coordinate Na(+): A164, C167, and T170.

Belongs to the peptidase T1B family. HslV subfamily. In terms of assembly, a double ring-shaped homohexamer of HslV is capped on each side by a ring-shaped HslU homohexamer. The assembly of the HslU/HslV complex is dependent on binding of ATP.

Its subcellular location is the cytoplasm. It catalyses the reaction ATP-dependent cleavage of peptide bonds with broad specificity.. Allosterically activated by HslU binding. In terms of biological role, protease subunit of a proteasome-like degradation complex believed to be a general protein degrading machinery. The sequence is that of ATP-dependent protease subunit HslV from Borrelia turicatae (strain 91E135).